The sequence spans 434 residues: Probable G-protein coupled receptor B0563.6 (434 aa).

An N-linked (GlcNAc...) asparagine glycan is attached at asparagine 12. The next 2 membrane-spanning stretches (helical) occupy residues 30–50 (VLPCICAIGIVGNITNLMVLA) and 65–85 (LAVADLLCMLFVLVFVSTEYL). N-linked (GlcNAc...) asparagine glycosylation occurs at asparagine 88. The next 2 helical transmembrane spans lie at 105–125 (LMLTLINWALGAGVYVVVALS) and 147–167 (ATRAIVIAFLIPAIFYVPYAI). An N-linked (GlcNAc...) asparagine glycan is attached at asparagine 181. A run of 2 helical transmembrane segments spans residues 208–228 (ILRFLPIIILTVLNIQIMIAF) and 258–278 (GGTVLMSLVCNIPAAINLLLI). 2 N-linked (GlcNAc...) asparagine glycosylation sites follow: asparagine 429 and asparagine 430.

The protein belongs to the G-protein coupled receptor 1 family.

The protein localises to the cell membrane. Not known. Putative receptor. The protein is Probable G-protein coupled receptor B0563.6 of Caenorhabditis elegans.